The chain runs to 701 residues: Elongation factor G (701 aa).

Residues 8–290 form the tr-type G domain; the sequence is SLYRNIGISA…AVVELLPAPT (283 aa). Residues 17 to 24, 88 to 92, and 142 to 145 contribute to the GTP site; these read AHIDAGKT, DTPGH, and NKMD.

It belongs to the TRAFAC class translation factor GTPase superfamily. Classic translation factor GTPase family. EF-G/EF-2 subfamily.

It is found in the cytoplasm. In terms of biological role, catalyzes the GTP-dependent ribosomal translocation step during translation elongation. During this step, the ribosome changes from the pre-translocational (PRE) to the post-translocational (POST) state as the newly formed A-site-bound peptidyl-tRNA and P-site-bound deacylated tRNA move to the P and E sites, respectively. Catalyzes the coordinated movement of the two tRNA molecules, the mRNA and conformational changes in the ribosome. The polypeptide is Elongation factor G (Neisseria meningitidis serogroup C (strain 053442)).